Consider the following 597-residue polypeptide: MAVNDREFHLKELDPVLMKDWEIAEKAEDFLKPVKVLAMELGLTEDEIIPHGKYIAKVDFAGVLARLKDRPNGKYIDVTAITPTPLGEGKSTTTMGLVQGLGKLGKKVTGAIRQPSSGPTFNIKGSAAGGGLSQCLPLSPFSLGLTGDIDAVTNSHNLAMVALQARLQHEANNTDEFLSSRHLTRLDIDPSRVEMKWAMDFCAQSLREIIMGIGGKTDGYRMPSGFGISVSSEVMAILSVFTSLSDLRERMGKIIVAYRKNDEPVTTADLEVDGAMTALLLRAVNPNLLQTIEGQPVFVHAGPFANIAIGQSSIVADRLALKLADYHVTESGFGADIGFEKFWNIKCRLSGLKPDCAVIVVTARALKMHGGGPKVTPGAPLDPAYTTPNTKLVEKGCQNMLAHIQTVKTAGINPVVCINHFAADTHEEIDIIRRTAEQAEARVAVSHHWAKGGDGATELAEAVTDACNEPNNFHFLYPENMPLKKRIETIARKVYGANGVSYTPIAMEKLARIESMGDTQFMPTCMVKTHLSLSHDPALKGRPSGFTLPIRDILTYMGAGLVVPVAGDIKLMPGTSSDPNFKRIDVDTQTGKVKGLF.

84–91 (TPLGEGKS) contributes to the ATP binding site.

The protein belongs to the formate--tetrahydrofolate ligase family.

The catalysed reaction is (6S)-5,6,7,8-tetrahydrofolate + formate + ATP = (6R)-10-formyltetrahydrofolate + ADP + phosphate. The protein operates within one-carbon metabolism; tetrahydrofolate interconversion. The polypeptide is Formate--tetrahydrofolate ligase (Dehalococcoides mccartyi (strain CBDB1)).